Consider the following 261-residue polypeptide: MVVVSVPAEVTVILLDIEGTTTPIAFVKDILFPYIKENVKEYLQTHWEEEECQQDVSLLRKQAEEDAHLDGAVPIPVASGGDVQQMIQAVVDNVSWQMSHDRKTTALKQLQGHMWKAAFTAGRMKAEVFADVVPAVRRWREAGMKVYIYSSGSVEAQKLLFGHSTEGDILELIDGHFDTKIGHKVESDSYRKIADSIGCSTNNILFLTDVTVEASAAEEADVHVAVVVRPGNAGLTDDEKTYYNLISSFSELYLPSTQSKV.

Mg(2+) contacts are provided by aspartate 16 and glutamate 18. Residues 150–151 and lysine 184 contribute to the substrate site; that span reads SS. Residue aspartate 209 participates in Mg(2+) binding.

It belongs to the HAD-like hydrolase superfamily. MasA/MtnC family. In terms of assembly, monomer. Mg(2+) serves as cofactor.

Its subcellular location is the cytoplasm. The protein localises to the nucleus. It catalyses the reaction 5-methylsulfanyl-2,3-dioxopentyl phosphate + H2O = 1,2-dihydroxy-5-(methylsulfanyl)pent-1-en-3-one + phosphate. Its pathway is amino-acid biosynthesis; L-methionine biosynthesis via salvage pathway; L-methionine from S-methyl-5-thio-alpha-D-ribose 1-phosphate: step 3/6. It participates in amino-acid biosynthesis; L-methionine biosynthesis via salvage pathway; L-methionine from S-methyl-5-thio-alpha-D-ribose 1-phosphate: step 4/6. In terms of biological role, bifunctional enzyme that catalyzes the enolization of 2,3-diketo-5-methylthiopentyl-1-phosphate (DK-MTP-1-P) into the intermediate 2-hydroxy-3-keto-5-methylthiopentenyl-1-phosphate (HK-MTPenyl-1-P), which is then dephosphorylated to form the acireductone 1,2-dihydroxy-3-keto-5-methylthiopentene (DHK-MTPene). The polypeptide is Enolase-phosphatase E1 (Enoph1) (Rattus norvegicus (Rat)).